The following is a 140-amino-acid chain: 3-hydroxyacyl-[acyl-carrier-protein] dehydratase FabZ (140 aa).

His-48 is an active-site residue.

This sequence belongs to the thioester dehydratase family. FabZ subfamily.

It localises to the cytoplasm. The catalysed reaction is a (3R)-hydroxyacyl-[ACP] = a (2E)-enoyl-[ACP] + H2O. Functionally, involved in unsaturated fatty acids biosynthesis. Catalyzes the dehydration of short chain beta-hydroxyacyl-ACPs and long chain saturated and unsaturated beta-hydroxyacyl-ACPs. This is 3-hydroxyacyl-[acyl-carrier-protein] dehydratase FabZ from Exiguobacterium sibiricum (strain DSM 17290 / CCUG 55495 / CIP 109462 / JCM 13490 / 255-15).